Here is a 152-residue protein sequence, read N- to C-terminus: Transcriptional regulator MraZ (152 aa).

2 SpoVT-AbrB domains span residues 5–52 (ATLV…PLPE) and 81–124 (ASEC…DETT).

The protein belongs to the MraZ family. Forms oligomers.

It localises to the cytoplasm. Its subcellular location is the nucleoid. Functionally, negatively regulates its own expression and that of the subsequent genes in the proximal part of the division and cell wall (dcw) gene cluster. Acts by binding directly to DNA. May also regulate the expression of genes outside the dcw cluster. The chain is Transcriptional regulator MraZ from Escherichia coli O127:H6 (strain E2348/69 / EPEC).